The primary structure comprises 473 residues: H(+)/Cl(-) exchange transporter ClcA (473 aa).

Topologically, residues 1-32 are cytoplasmic; the sequence is MKTDTSTFLAQQIVRLRRRDQIRRLMQRDKTP. A helical transmembrane segment spans residues 33-69; it reads LAILFMAAVVGTLTGLVGVAFEKTVSWVQNMRIGALV. The Periplasmic portion of the chain corresponds to 70-76; the sequence is QVADHAF. Residues 77–100 traverse the membrane as a helical segment; the sequence is LLWPLAFILSALLAMVGYFLVRKF. Positions 106 to 110 match the Selectivity filter part_1 motif; the sequence is GSGIP. Residue S107 participates in chloride binding. Positions 109-116 form an intramembrane region, helical; the sequence is IPEIEGAL. The Cytoplasmic portion of the chain corresponds to 117–123; that stretch reads EELRPVR. The next 2 membrane-spanning stretches (helical) occupy residues 124-141 and 148-166; these read WWRV…TLGA and EGPT…LDVF. Residues 146–150 carry the Selectivity filter part_2 motif; that stretch reads GREGP. The Cytoplasmic segment spans residues 167 to 176; the sequence is RMRSAEARHT. Intramembrane regions (helical) lie at residues 177-189 and 193-201; these read LLAT…LSAA and PLAGILFII. Residues 202 to 214 are Cytoplasmic-facing; the sequence is EEMRPQFRYNLIS. A helical membrane pass occupies residues 215-232; sequence IKAVFTGVIMSSIVFRIF. At 233-252 the chain is on the periplasmic side; sequence NGEAPIIEVGKLSDAPVNTL. The helical transmembrane segment at 253 to 281 threads the bilayer; that stretch reads WLYLILGIIFGCVGPVFNSLVLRTQDMFQ. Over 282 to 287 the chain is Cytoplasmic; the sequence is RFHGGE. Residues 288–309 traverse the membrane as a helical segment; sequence IKKWVLMGGAIGGLCGILGLIE. Residues 310-329 lie on the Periplasmic side of the membrane; the sequence is PAAAGGGFNLIPIAAAGNFS. 2 helical membrane-spanning segments follow: residues 330–349 and 355–376; these read VGLL…LCFS and GIFA…MAAA. The Selectivity filter part_3 signature appears at 355–359; the sequence is GIFAP. Chloride is bound by residues I356 and F357. The Periplasmic segment spans residues 377 to 386; that stretch reads VLFPQYHLEA. Residues 387 to 401 constitute an intramembrane region (helical); sequence GTFAIAGMGALMAAS. The segment at residues 402–404 is an intramembrane region (note=Loop between two helices); that stretch reads VRA. An intramembrane region (helical) is located at residues 405–416; it reads PLTGIVLVLEMT. Positions 417 to 421 form an intramembrane region, note=Loop between two helices; that stretch reads DNYQL. The helical transmembrane segment at 422-438 threads the bilayer; sequence ILPMIITCLGATLLAQF. Residues 439 to 473 are Cytoplasmic-facing; sequence LGGKPLYSTILARTLAKQDAEQAAKNQNAPAGENT. Y445 contributes to the chloride binding site.

The protein belongs to the chloride channel (TC 2.A.49) family. ClcA subfamily. Homodimer.

The protein localises to the cell inner membrane. It carries out the reaction 2 chloride(in) + H(+)(out) = 2 chloride(out) + H(+)(in). In terms of biological role, proton-coupled chloride transporter. Functions as antiport system and exchanges two chloride ions for 1 proton. Probably acts as an electrical shunt for an outwardly-directed proton pump that is linked to amino acid decarboxylation, as part of the extreme acid resistance (XAR) response. The protein is H(+)/Cl(-) exchange transporter ClcA of Salmonella typhi.